Reading from the N-terminus, the 528-residue chain is Major facilitator-type transporter psiT2 (528 aa).

The tract at residues 1–20 (MSPERSASLEPDEHSSLLSD) is disordered. A run of 5 helical transmembrane segments spans residues 87–107 (FYSG…IFML), 125–145 (LGVA…MMLV), 148–168 (VCAG…SELT), 174–194 (ALVV…GPLI), and 220–240 (FLPS…GYFF). The segment covering 260–270 (STSSISSRTST) has biased composition (low complexity). Residues 260–299 (STSSISSRTSTLYGATDDHNRDASESTALSPEEAEDEIDS) form a disordered region. 6 helical membrane passes run 322-342 (FLMF…FTAV), 357-377 (AFSV…PWVL), 388-408 (FCMF…PLAQ), 424-444 (GLLY…VMAF), 460-479 (LATA…ALCP), and 493-513 (NILG…AGVW).

This sequence belongs to the major facilitator superfamily. TCR/Tet family.

It is found in the membrane. Functionally, major facilitator-type transporter; part of the gene cluster that mediates the biosynthesis of psilocybin, a psychotropic tryptamine-derived natural product. This is Major facilitator-type transporter psiT2 from Psilocybe cyanescens.